The following is a 59-amino-acid chain: Chromatin protein Cren7 (59 aa).

The protein belongs to the Cren7 family. In terms of assembly, monomer. In terms of processing, methylated at multiple sites, to varying extents.

The protein localises to the chromosome. Its subcellular location is the cytoplasm. In terms of biological role, a chromatin protein, binds double-stranded DNA without sequence specificity. Constrains negative DNA supercoils. The protein is Chromatin protein Cren7 of Pyrobaculum aerophilum (strain ATCC 51768 / DSM 7523 / JCM 9630 / CIP 104966 / NBRC 100827 / IM2).